Consider the following 389-residue polypeptide: MKFMKYAVFFYTSVGIEPYTIDSRSKKASLWSHLLFWANVINLSVIVFGEILYLGVAYSDGKFIDAVTVLSYIGFVIVGMSKMFFIWWKKTDLSDLVKELEHIYPNGKAEEEMYRLDRYLRSCSRISITYALLYSVLIWTFNLFSIMQFLVYEKLLKIRVVGQTLPYLMYFPWNWHENWTYYVLLFCQNFAGHTSASGQISTDLLLCAVATQVVMHFDYLARVVEKQVLDRDWSENSRFLAKTVQYHQRILRLMDVLNDIFGIPLLLNFMVSTFVICFVGFQMTVGVPPDIMIKLFLFLFSSLSQVYLICHYGQLIADASSSLSISAYKQNWQNADIRYRRALVFFIARPQRTTYLKATIFMNITRATMTDLLQVSYKFFALLRTMYIK.

Over 1 to 33 (MKFMKYAVFFYTSVGIEPYTIDSRSKKASLWSH) the chain is Cytoplasmic. Residues 34-54 (LLFWANVINLSVIVFGEILYL) traverse the membrane as a helical segment. At 55–66 (GVAYSDGKFIDA) the chain is on the extracellular side. Residues 67 to 87 (VTVLSYIGFVIVGMSKMFFIW) traverse the membrane as a helical segment. The Cytoplasmic portion of the chain corresponds to 88–130 (WKKTDLSDLVKELEHIYPNGKAEEEMYRLDRYLRSCSRISITY). A helical membrane pass occupies residues 131–151 (ALLYSVLIWTFNLFSIMQFLV). Over 152–199 (YEKLLKIRVVGQTLPYLMYFPWNWHENWTYYVLLFCQNFAGHTSASGQ) the chain is Extracellular. Asn-178 is a glycosylation site (N-linked (GlcNAc...) asparagine). The chain crosses the membrane as a helical span at residues 200–220 (ISTDLLLCAVATQVVMHFDYL). Residues 221-259 (ARVVEKQVLDRDWSENSRFLAKTVQYHQRILRLMDVLND) are Cytoplasmic-facing. A helical transmembrane segment spans residues 260–280 (IFGIPLLLNFMVSTFVICFVG). At 281–290 (FQMTVGVPPD) the chain is on the extracellular side. A helical membrane pass occupies residues 291-311 (IMIKLFLFLFSSLSQVYLICH). Residues 312–359 (YGQLIADASSSLSISAYKQNWQNADIRYRRALVFFIARPQRTTYLKAT) are Cytoplasmic-facing. A helical membrane pass occupies residues 360–380 (IFMNITRATMTDLLQVSYKFF). Over 381–389 (ALLRTMYIK) the chain is Extracellular.

The protein belongs to the insect chemoreceptor superfamily. Heteromeric odorant receptor channel (TC 1.A.69) family. Or49a subfamily. As to quaternary structure, interacts with Orco. Complexes exist early in the endomembrane system in olfactory sensory neurons (OSNs), coupling these complexes to the conserved ciliary trafficking pathway.

It is found in the cell membrane. Its function is as follows. Odorant receptor which mediates acceptance or avoidance behavior, depending on its substrates. The odorant receptor repertoire encodes a large collection of odor stimuli that vary widely in identity, intensity, and duration. May form a complex with Orco to form odorant-sensing units, providing sensitive and prolonged odorant signaling and calcium permeability. This is Odorant receptor 85c (Or85c) from Drosophila melanogaster (Fruit fly).